A 465-amino-acid chain; its full sequence is MPSTPSLKVVHELPACTLCVGPLEDAVTAPCGHTFCRLCLPTLSQMGAQSSGKILLCPLCQEEEQAETPMAPVPLGPLGETYCEEHGEKIYFFCENDAEFLCVFCREGPTHQAHTVGFLDEAIQPYRDRLRSRLEALSMERDEIEDVKCREDQKLQVLLTQIENKKHQVEAAFERLQQELEQQRCLLLARLRELEQQIWKERDEYITKVSEEVSRLGAQVKELEEKCQQPASELLQDIRVNQSRCEMKTFVSPEAISPDLVKKIRDFHRKILTLPEMMRMFSENLAHHLEIDSGVITLDPQTASRSLVLSEDRKSVRYTRQKKNLPDSPLRFDGLPAVLGFPGFSSGRHRWQVDLQLGDGGGCTVGVAGEGVRRKGEMGLSAEDGVWAVIISHQQCWASTSPGTDLPLSEIPRYVGVALDYEAGQVTLFNAQTQEPIFTFAASFSGKVFPFFAVWKKGSCLTLKG.

The segment at 16-61 (CTLCVGPLEDAVTAPCGHTFCRLCLPTLSQMGAQSSGKILLCPLCQ) adopts an RING-type zinc-finger fold. The segment at 78–119 (LGETYCEEHGEKIYFFCENDAEFLCVFCREGPTHQAHTVGFL) adopts a B box-type zinc-finger fold. Zn(2+)-binding residues include Cys83, His86, Cys105, and His111. A coiled-coil region spans residues 126–229 (YRDRLRSRLE…VKELEEKCQQ (104 aa)). Positions 276–465 (EMMRMFSENL…KKGSCLTLKG (190 aa)) constitute a B30.2/SPRY domain.

The protein belongs to the TRIM/RBCC family. As to quaternary structure, interacts with paxillin/PXN; this interaction recruits TRIM15 to focal adhesions. Interacts with TRIM8; this interaction prevents TRIM8 cytoplasmic translocation.

It is found in the cytoplasm. The protein localises to the nucleus. It localises to the cell junction. Its subcellular location is the focal adhesion. It catalyses the reaction S-ubiquitinyl-[E2 ubiquitin-conjugating enzyme]-L-cysteine + [acceptor protein]-L-lysine = [E2 ubiquitin-conjugating enzyme]-L-cysteine + N(6)-ubiquitinyl-[acceptor protein]-L-lysine.. Its function is as follows. E3 ubiquitin ligase that plays a role in several processes including innate antiviral immnity, cell migration and chemotaxis. Acts as a 'Lys-63'-specific ubiquitin ligase for MAPK1/ERK2 and MAPK3/ERK1, promoting their activation by facilitating their interaction with MAP2K1 and MAP2K2. Also plays a role in cell migration and chemotaxis by acting as a stable focal adhesion component upon recruitment by multi-adapter protein paxillin/PXN. Functions in the RIGI-mediated interferon induction pathway upstream or at the level of MAVS. Inhibits NF-kappa-B activation by turnover of 'Lys-63'-linked ubiquitination of MAP3K7/TAK1. Mechanistically, prevents TRIM8 cytoplasmic translocation and thus inhibits TRIM8-mediated 'Lys-63'-linked polyubiquitination of MAP3K7/TAK1 in the cytoplasm. Also has an important regulatory effect on the activation of hepatic stellate cells (HSCs). In Macaca mulatta (Rhesus macaque), this protein is E3 ubiquitin-protein ligase TRIM15 (TRIM15).